The sequence spans 364 residues: Dihydroorotate dehydrogenase (quinone) (364 aa).

FMN contacts are provided by residues 62–66 (AGFDK) and T86. K66 serves as a coordination point for substrate. Residue 111–115 (NRMGF) coordinates substrate. Residues N142 and N175 each coordinate FMN. N175 provides a ligand contact to substrate. The active-site Nucleophile is the S178. N180 provides a ligand contact to substrate. 2 residues coordinate FMN: K216 and T244. 245–246 (NT) contacts substrate. Residues G267, G296, and 317 to 318 (YT) contribute to the FMN site.

This sequence belongs to the dihydroorotate dehydrogenase family. Type 2 subfamily. Monomer. FMN is required as a cofactor.

Its subcellular location is the cell membrane. The enzyme catalyses (S)-dihydroorotate + a quinone = orotate + a quinol. It functions in the pathway pyrimidine metabolism; UMP biosynthesis via de novo pathway; orotate from (S)-dihydroorotate (quinone route): step 1/1. Catalyzes the conversion of dihydroorotate to orotate with quinone as electron acceptor. This chain is Dihydroorotate dehydrogenase (quinone), found in Anaeromyxobacter dehalogenans (strain 2CP-C).